Reading from the N-terminus, the 1057-residue chain is Hemophilin receptor (1057 aa).

The TBDR plug domain occupies 168–285 (KVYDANRSSV…VGGAVVVKTL (118 aa)). The 762-residue stretch at 296–1057 (SFGAELKVEG…TMKISWTTKF (762 aa)) folds into the TBDR beta-barrel domain.

This sequence belongs to the TonB-dependent receptor family.

Its subcellular location is the cell outer membrane. Part of a high affinity heme acquisition system. Functions as a gateway for heme entry into the bacterial cell, enabling growth on hemoprotein sources. Can acquire heme directly from hemoprotein reservoirs, however, HphA likely enhances the efficiency of this process by delivering heme to HphR. Is essential for virulence, bacterial dissemination and growth in the blood. This chain is Hemophilin receptor, found in Acinetobacter baumannii.